Reading from the N-terminus, the 413-residue chain is Putative F-box/kelch-repeat protein At3g22870 (413 aa).

Positions 2-53 constitute an F-box domain; that stretch reads TLTISDLPRDLKKKIFSRIPLRYVRALRLTCKEWETLIKSRSLKIDEEESQM. Kelch repeat units follow at residues 156–202 and 331–379; these read LLRF…IGVS and KVFI…RRRQ.

In Arabidopsis thaliana (Mouse-ear cress), this protein is Putative F-box/kelch-repeat protein At3g22870.